A 408-amino-acid chain; its full sequence is Glutamate N-acetyltransferase (408 aa).

The substrate site is built by Thr-150, Lys-176, Thr-189, Glu-271, Asn-403, and Thr-408. Thr-189 functions as the Nucleophile in the catalytic mechanism.

Belongs to the ArgJ family. Heterotetramer of two alpha and two beta chains.

It localises to the cytoplasm. It catalyses the reaction N(2)-acetyl-L-ornithine + L-glutamate = N-acetyl-L-glutamate + L-ornithine. It functions in the pathway amino-acid biosynthesis; L-arginine biosynthesis; L-ornithine and N-acetyl-L-glutamate from L-glutamate and N(2)-acetyl-L-ornithine (cyclic): step 1/1. In terms of biological role, catalyzes the transfer of the acetyl group from N(2)-acetylornithine to glutamate, forming N-acetylglutamate and L-ornithine. The protein is Glutamate N-acetyltransferase of Methanococcus maripaludis (strain C7 / ATCC BAA-1331).